The chain runs to 453 residues: Ribulose bisphosphate carboxylase large chain (453 aa).

The propeptide occupies 1–2 (MS). An N-acetylproline modification is found at Pro-3. Lys-14 carries the N6,N6,N6-trimethyllysine modification. Residues Asn-123 and Thr-173 each coordinate substrate. The active-site Proton acceptor is the Lys-175. Lys-177 is a substrate binding site. Lys-201, Asp-203, and Glu-204 together coordinate Mg(2+). N6-carboxylysine is present on Lys-201. His-294 (proton acceptor) is an active-site residue. Arg-295, His-327, and Ser-379 together coordinate substrate.

The protein belongs to the RuBisCO large chain family. Type I subfamily. In terms of assembly, heterohexadecamer of 8 large chains and 8 small chains; disulfide-linked. The disulfide link is formed within the large subunit homodimers. Requires Mg(2+) as cofactor. Post-translationally, the disulfide bond which can form in the large chain dimeric partners within the hexadecamer appears to be associated with oxidative stress and protein turnover.

The protein resides in the plastid. The protein localises to the chloroplast. It catalyses the reaction 2 (2R)-3-phosphoglycerate + 2 H(+) = D-ribulose 1,5-bisphosphate + CO2 + H2O. The catalysed reaction is D-ribulose 1,5-bisphosphate + O2 = 2-phosphoglycolate + (2R)-3-phosphoglycerate + 2 H(+). In terms of biological role, ruBisCO catalyzes two reactions: the carboxylation of D-ribulose 1,5-bisphosphate, the primary event in carbon dioxide fixation, as well as the oxidative fragmentation of the pentose substrate in the photorespiration process. Both reactions occur simultaneously and in competition at the same active site. This Phuopsis stylosa (Caucasian crosswort) protein is Ribulose bisphosphate carboxylase large chain.